We begin with the raw amino-acid sequence, 162 residues long: Caveolin-2 (162 aa).

Residues M1–K86 lie on the Cytoplasmic side of the membrane. At Y19 the chain carries Phosphotyrosine; by SRC. A phosphoserine mark is found at S20 and S23. Y27 carries the phosphotyrosine; by SRC modification. Residue S36 is modified to Phosphoserine. The helical intramembrane region spans F87–L107. Over S108 to D162 the chain is Cytoplasmic.

It belongs to the caveolin family. Monomer or homodimer. Interacts with CAV1; the interaction forms a stable heterooligomeric complex that is required for targeting to lipid rafts and for caveolae formation. Tyrosine phosphorylated forms do not form heterooligomers with the Tyr-19-phosphorylated form existing as a monomer or dimer, and the Tyr-27-form as a monomer only. Interacts (tyrosine phosphorylated form) with the SH2 domain-containing proteins, RASA1, NCK1 and SRC. Interacts (tyrosine phosphorylated form) with INSR, the interaction (Tyr-27-phosphorylated form) is increased on insulin stimulation. Interacts (Tyr-19 phosphorylated form) with MAPK1 (phosphorylated form); the interaction, promoted by insulin, leads to nuclear location and MAPK1 activation. Interacts with STAT3; the interaction is increased on insulin-induced tyrosine phosphorylation leading to STAT activation. In terms of processing, phosphorylated on serine and tyrosine residues. CAV1 promotes phosphorylation on Ser-23 which then targets the complex to the plasma membrane, lipid rafts and caveolae. Phosphorylation on Ser-36 appears to modulate mitosis in endothelial cells. Phosphorylation on both Tyr-19 and Tyr-27 is required for insulin-induced 'Ser-727' phosphorylation of STAT3 and its activation. Phosphorylation on Tyr-19 is required for insulin-induced phosphorylation of MAPK1 and DNA binding of STAT3. Tyrosine phosphorylation is induced by both EGF and insulin (By. similarity).

It localises to the nucleus. The protein resides in the cytoplasm. It is found in the golgi apparatus membrane. The protein localises to the cell membrane. Its subcellular location is the membrane. It localises to the caveola. In terms of biological role, may act as a scaffolding protein within caveolar membranes. Interacts directly with G-protein alpha subunits and can functionally regulate their activity. Acts as an accessory protein in conjunction with CAV1 in targeting to lipid rafts and driving caveolae formation. The Ser-36 phosphorylated form has a role in modulating mitosis in endothelial cells. Positive regulator of cellular mitogenesis of the MAPK signaling pathway. Required for the insulin-stimulated nuclear translocation and activation of MAPK1 and STAT3, and the subsequent regulation of cell cycle progression. The sequence is that of Caveolin-2 (CAV2) from Pongo abelii (Sumatran orangutan).